Reading from the N-terminus, the 345-residue chain is Phosphoribosylformylglycinamidine cyclo-ligase (345 aa).

It belongs to the AIR synthase family.

Its subcellular location is the cytoplasm. It carries out the reaction 2-formamido-N(1)-(5-O-phospho-beta-D-ribosyl)acetamidine + ATP = 5-amino-1-(5-phospho-beta-D-ribosyl)imidazole + ADP + phosphate + H(+). It participates in purine metabolism; IMP biosynthesis via de novo pathway; 5-amino-1-(5-phospho-D-ribosyl)imidazole from N(2)-formyl-N(1)-(5-phospho-D-ribosyl)glycinamide: step 2/2. This is Phosphoribosylformylglycinamidine cyclo-ligase from Pectobacterium atrosepticum (strain SCRI 1043 / ATCC BAA-672) (Erwinia carotovora subsp. atroseptica).